Consider the following 188-residue polypeptide: Photosystem I assembly protein Ycf4 (188 aa).

Helical transmembrane passes span 26–46 (YFWA…GLSS) and 68–88 (LVMG…WFVI).

The protein belongs to the Ycf4 family.

It is found in the cellular thylakoid membrane. Its function is as follows. Seems to be required for the assembly of the photosystem I complex. The sequence is that of Photosystem I assembly protein Ycf4 from Synechococcus elongatus (strain ATCC 33912 / PCC 7942 / FACHB-805) (Anacystis nidulans R2).